Here is a 446-residue protein sequence, read N- to C-terminus: MITIKKGLDLPIAGTPSQVINDGKTIKKVALLGEEYVGMRPTMHVRVGDEVKKAQILFEDKKNPGVKFTAPAAGKVIEVNRGAKRVLQSVVIEVAGEEQVTFDKFEAAQLSGLDREVIKTQLVESGLWTALRTRPFSKVPAIESATKAIFVTAMDTNPLAAKPELIINEQQEAFIAGLDILSALTEGKVYVCKSGTSLPRSSQSNVEEHVFDGPHPAGLAGTHMHFLYPVNAENVAWSINYQDVIAFGKLFLTGELYTDRVISLAGPVVNNPRLVRTVMGASLDDLTDSELMPGEVRVISGSVLTGTHATGPHAYLGRYHQQVSVLREGREKELLGWAMPGKNKFSVTRSFLGHLFKGQLFNMTTSTNGSDRSMVPIGSYERVMPLDMEPTLLLRDLCAGDSDSAQALGALELDEEDLALCTFVCPGKYEYGQLLRECLDKIEKEG.

Belongs to the NqrA family. Composed of six subunits; NqrA, NqrB, NqrC, NqrD, NqrE and NqrF.

The catalysed reaction is a ubiquinone + n Na(+)(in) + NADH + H(+) = a ubiquinol + n Na(+)(out) + NAD(+). NQR complex catalyzes the reduction of ubiquinone-1 to ubiquinol by two successive reactions, coupled with the transport of Na(+) ions from the cytoplasm to the periplasm. NqrA to NqrE are probably involved in the second step, the conversion of ubisemiquinone to ubiquinol. This is Na(+)-translocating NADH-quinone reductase subunit A from Vibrio parahaemolyticus serotype O3:K6 (strain RIMD 2210633).